Here is a 254-residue protein sequence, read N- to C-terminus: Thiazole synthase (254 aa).

Lys95 functions as the Schiff-base intermediate with DXP in the catalytic mechanism. 1-deoxy-D-xylulose 5-phosphate contacts are provided by residues Gly156, 182-183 (AG), and 204-205 (NT).

The protein belongs to the ThiG family. As to quaternary structure, homotetramer. Forms heterodimers with either ThiH or ThiS.

Its subcellular location is the cytoplasm. The catalysed reaction is [ThiS sulfur-carrier protein]-C-terminal-Gly-aminoethanethioate + 2-iminoacetate + 1-deoxy-D-xylulose 5-phosphate = [ThiS sulfur-carrier protein]-C-terminal Gly-Gly + 2-[(2R,5Z)-2-carboxy-4-methylthiazol-5(2H)-ylidene]ethyl phosphate + 2 H2O + H(+). Its pathway is cofactor biosynthesis; thiamine diphosphate biosynthesis. Its function is as follows. Catalyzes the rearrangement of 1-deoxy-D-xylulose 5-phosphate (DXP) to produce the thiazole phosphate moiety of thiamine. Sulfur is provided by the thiocarboxylate moiety of the carrier protein ThiS. In vitro, sulfur can be provided by H(2)S. This chain is Thiazole synthase, found in Shewanella oneidensis (strain ATCC 700550 / JCM 31522 / CIP 106686 / LMG 19005 / NCIMB 14063 / MR-1).